Reading from the N-terminus, the 485-residue chain is GTPase Der (485 aa).

2 EngA-type G domains span residues 3-167 (PTIA…PEPE) and 176-349 (PVFA…NAAM). Residues 9-16 (GRPNVGKS), 56-60 (DTGGF), 119-122 (NKGE), 182-189 (GRPNVGKS), 229-233 (DTAGV), and 294-297 (NKWD) each bind GTP. Residues 350 to 434 (IKMPTPKITR…PLRIQYNVSE (85 aa)) enclose the KH-like domain. Residues 435–485 (NPYENAEDKPKKKPLRRVSLSNRIEKREGRKEEKNRFKKKTKVSVKKQFSK) are disordered. A compositionally biased stretch (basic and acidic residues) spans 457–469 (RIEKREGRKEEKN). Residues 470-485 (RFKKKTKVSVKKQFSK) are compositionally biased toward basic residues.

This sequence belongs to the TRAFAC class TrmE-Era-EngA-EngB-Septin-like GTPase superfamily. EngA (Der) GTPase family. As to quaternary structure, associates with the 50S ribosomal subunit.

GTPase that plays an essential role in the late steps of ribosome biogenesis. The polypeptide is GTPase Der (Neisseria gonorrhoeae (strain NCCP11945)).